The following is a 578-amino-acid chain: L-2,3-diaminopropanoate--citrate ligase (578 aa).

The protein belongs to the IucA/IucC family. As to quaternary structure, forms a mixture of monomer and dimer in solution.

It carries out the reaction (S)-2,3-diaminopropanoate + citrate + ATP = 2-[(L-alanin-3-ylcarbamoyl)methyl]-2-hydroxybutanedioate + AMP + diphosphate. It participates in siderophore biosynthesis. Functionally, catalyzes the synthesis of citryl-L-2,3-diaminopropionic acid from L-2,3-diaminopropionic acid (L-Dap) and citrate, the first step in staphyloferrin B biosynthesis. In Staphylococcus aureus (strain NCTC 8325 / PS 47), this protein is L-2,3-diaminopropanoate--citrate ligase.